The primary structure comprises 453 residues: Tubulin alpha-13 chain (453 aa).

Residue glutamine 11 participates in GTP binding. At lysine 40 the chain carries N6-acetyllysine. Residues glutamate 71, serine 140, glycine 144, threonine 145, threonine 179, asparagine 206, and asparagine 228 each contribute to the GTP site. Glutamate 71 is a Mg(2+) binding site. Glutamate 254 is an active-site residue. The segment at 429 to 453 (EKDYEEVGTESQEGDGEEGEDGGDQ) is disordered. Acidic residues predominate over residues 431–453 (DYEEVGTESQEGDGEEGEDGGDQ).

It belongs to the tubulin family. In terms of assembly, dimer of alpha and beta chains. A typical microtubule is a hollow water-filled tube with an outer diameter of 25 nm and an inner diameter of 15 nM. Alpha-beta heterodimers associate head-to-tail to form protofilaments running lengthwise along the microtubule wall with the beta-tubulin subunit facing the microtubule plus end conferring a structural polarity. Microtubules usually have 13 protofilaments but different protofilament numbers can be found in some organisms and specialized cells. Mg(2+) serves as cofactor. In terms of processing, acetylation of alpha chains at Lys-40 stabilizes microtubules and affects affinity and processivity of microtubule motors. This modification has a role in multiple cellular functions, ranging from cell motility, cell cycle progression or cell differentiation to intracellular trafficking and signaling.

It localises to the cytoplasm. The protein resides in the cytoskeleton. It carries out the reaction GTP + H2O = GDP + phosphate + H(+). Tubulin is the major constituent of microtubules, a cylinder consisting of laterally associated linear protofilaments composed of alpha- and beta-tubulin heterodimers. Microtubules grow by the addition of GTP-tubulin dimers to the microtubule end, where a stabilizing cap forms. Below the cap, tubulin dimers are in GDP-bound state, owing to GTPase activity of alpha-tubulin. The protein is Tubulin alpha-13 chain (TUBA13) of Naegleria pringsheimi (Amoeba).